The primary structure comprises 425 residues: ATP-dependent RNA helicase eIF4A (425 aa).

The Q motif signature appears at 38–66; that stretch reads DTWEDYGLKEDLLKGIYSIGFETPSFIQK. One can recognise a Helicase ATP-binding domain in the interval 69–241; sequence IQPIIDGRDI…EEILINPVII (173 aa). ATP is bound at residue 82–89; the sequence is AQSGTGKT. The DEAD box motif lies at 187–190; the sequence is DEAD. Residues 252 to 425 enclose the Helicase C-terminal domain; that stretch reads GIRQYFIDLR…KELPADFSFQ (174 aa).

It belongs to the DEAD box helicase family. eIF4A subfamily. Component of the eIF4F complex, which composition varies with external and internal environmental conditions. It is composed of at least eIF4A, eIF4E and eIF4G.

It is found in the cytoplasm. The catalysed reaction is ATP + H2O = ADP + phosphate + H(+). In terms of biological role, ATP-dependent RNA helicase which is a subunit of the eIF4F complex involved in cap recognition and is required for mRNA binding to ribosome. In the current model of translation initiation, eIF4A unwinds RNA secondary structures in the 5'-UTR of mRNAs which is necessary to allow efficient binding of the small ribosomal subunit, and subsequent scanning for the initiator codon. This Encephalitozoon cuniculi (strain GB-M1) (Microsporidian parasite) protein is ATP-dependent RNA helicase eIF4A (TIF1).